A 700-amino-acid polypeptide reads, in one-letter code: Peroxisomal acyl-coenzyme A oxidase 1 (700 aa).

Residues Thr147, Gly186, and 412–417 (CGGHGY) contribute to the FAD site. Catalysis depends on Glu437, which acts as the Proton acceptor. The short motif at 698-700 (SKL) is the Microbody targeting signal element.

This sequence belongs to the acyl-CoA oxidase family. Requires FAD as cofactor.

Its subcellular location is the peroxisome. It carries out the reaction a 2,3-saturated acyl-CoA + O2 = a (2E)-enoyl-CoA + H2O2. Catalyzes the desaturation of acyl-CoAs to 2-trans-enoyl-CoAs. First enzyme of the fatty acid beta-oxidation pathway. This chain is Peroxisomal acyl-coenzyme A oxidase 1 (acox1), found in Dictyostelium discoideum (Social amoeba).